Consider the following 580-residue polypeptide: MNIKYLIKKDIEQALIKINSNYTYEVFIISSKKIELGHYQVDNLMKISSRLKIKPYKLFQKILILIEKKKIYKKIIFSHPGFINIFIKNEWLSEKLEIPFISSRLGVKYIYPKKNIVIDYSSPNIAKEMHVGHLRSTIIGDVTVRILEFLGQKVIRANHIGDWGTQFGILIAYLEDKKLLKKLKKNLLSLQDLDNIYCQSKKQYNSNELFSKKSREFVVKLQNGDQYCCAIWKKLVSITMLENYKIYKKLNVTLEEKHTMGESFYNPMLPKIVEDLKKQKIAIEKNGAVIVFLDEFKNRMGDSMGVIIRKKDKGFLYSTTDIACLKYRYQNLHADRIIYYTDSRQYQHLLQSWTIAEKANYISKNLLLEHHMFGMMLSKNRRPFKTRDGNTIKLSNLLNESINRATNLIQKKQPNLCKKKLIKLGEIIGISAVKYSDLSKNRNTNYIFDWDKMLSFEGNTAPYIQYAYTRIISILKKSNIPLHKIKMKIILNEESEINLAIKILEFEEIILLIAKNGTPHIMCKYLYQLSTYFSHFYENCSILFSEKIKIRKSRIKLSFLTAKTIKKGLNLLGIKTIKKM.

The 'HIGH' region motif lies at 123-133; the sequence is PNIAKEMHVGH.

It belongs to the class-I aminoacyl-tRNA synthetase family. In terms of assembly, monomer.

The protein resides in the cytoplasm. It carries out the reaction tRNA(Arg) + L-arginine + ATP = L-arginyl-tRNA(Arg) + AMP + diphosphate. The polypeptide is Arginine--tRNA ligase (argS) (Buchnera aphidicola subsp. Schizaphis graminum (strain Sg)).